Consider the following 526-residue polypeptide: Peptide chain release factor 3 (526 aa).

Positions 8-277 (GKRRTFAIIS…GLTDWAPAPQ (270 aa)) constitute a tr-type G domain. Residues 17–24 (SHPDAGKT), 85–89 (DTPGH), and 139–142 (NKLD) each bind GTP.

The protein belongs to the TRAFAC class translation factor GTPase superfamily. Classic translation factor GTPase family. PrfC subfamily.

Its subcellular location is the cytoplasm. In terms of biological role, increases the formation of ribosomal termination complexes and stimulates activities of RF-1 and RF-2. It binds guanine nucleotides and has strong preference for UGA stop codons. It may interact directly with the ribosome. The stimulation of RF-1 and RF-2 is significantly reduced by GTP and GDP, but not by GMP. The protein is Peptide chain release factor 3 of Aliivibrio fischeri (strain MJ11) (Vibrio fischeri).